The following is a 444-amino-acid chain: MNNMNKVIIIGGGLAGSEAAWQAANRGCQVELVDMKPEKYSPAHSSPLLGELVCSNSLRSNDPTSAVGLMKREMRFFNSLIMDVADSTAVPAGKALAVDRDKFAEAITARLESHPNISISHREVTAVPEPADHPTIIATGPLTAEDFAESLAELTGRDRLAFYDAIAPILDSESLNMDIVYCKSRYDDGPGDYLNCPMNREEYERFISELASADYMPLKDFEDAKYFEGCLPVEVICSRGVDTLRFGPMKPVGLPDPRTGQDPYAVVQLRMENAEGSTYNMVGFQTKMTYPEQKRIFRMIPGMENVEFVRLGSIHRNTFICAPELLADTLQIKKRPDLLLAGQLSGVEGYIESAAMGLLAGINAARRAMGEELVSPPAEMALGAMVGHLTKSAAKNFQPSNVNFGLFPAWEKKVPKRFRGEKRAEASALALEVWNEKWQISEQV.

11 to 16 (GGGLAG) is a binding site for FAD.

The protein belongs to the MnmG family. TrmFO subfamily. Requires FAD as cofactor.

The protein resides in the cytoplasm. The catalysed reaction is uridine(54) in tRNA + (6R)-5,10-methylene-5,6,7,8-tetrahydrofolate + NADH + H(+) = 5-methyluridine(54) in tRNA + (6S)-5,6,7,8-tetrahydrofolate + NAD(+). It catalyses the reaction uridine(54) in tRNA + (6R)-5,10-methylene-5,6,7,8-tetrahydrofolate + NADPH + H(+) = 5-methyluridine(54) in tRNA + (6S)-5,6,7,8-tetrahydrofolate + NADP(+). Catalyzes the folate-dependent formation of 5-methyl-uridine at position 54 (M-5-U54) in all tRNAs. This is Methylenetetrahydrofolate--tRNA-(uracil-5-)-methyltransferase TrmFO from Desulfotalea psychrophila (strain LSv54 / DSM 12343).